The following is a 219-amino-acid chain: Holliday junction branch migration complex subunit RuvA (219 aa).

Residues 1–71 are domain I; the sequence is MISWIKGELV…EDSDMLFGFS (71 aa). Residues 72–150 form a domain II region; the sequence is TKDQRDFFIQ…NKEIEKENLN (79 aa). The segment at 151–161 is flexible linker; the sequence is INNFLEKNKDL. Positions 161–219 are domain III; it reads LDSIFKDIDLTLQSLNYSKKEIKNLFPKLINNIKNSSLEKESISFENLLKEAMNYLDHK.

It belongs to the RuvA family. Homotetramer. Forms an RuvA(8)-RuvB(12)-Holliday junction (HJ) complex. HJ DNA is sandwiched between 2 RuvA tetramers; dsDNA enters through RuvA and exits via RuvB. An RuvB hexamer assembles on each DNA strand where it exits the tetramer. Each RuvB hexamer is contacted by two RuvA subunits (via domain III) on 2 adjacent RuvB subunits; this complex drives branch migration. In the full resolvosome a probable DNA-RuvA(4)-RuvB(12)-RuvC(2) complex forms which resolves the HJ.

It localises to the cytoplasm. Its function is as follows. The RuvA-RuvB-RuvC complex processes Holliday junction (HJ) DNA during genetic recombination and DNA repair, while the RuvA-RuvB complex plays an important role in the rescue of blocked DNA replication forks via replication fork reversal (RFR). RuvA specifically binds to HJ cruciform DNA, conferring on it an open structure. The RuvB hexamer acts as an ATP-dependent pump, pulling dsDNA into and through the RuvAB complex. HJ branch migration allows RuvC to scan DNA until it finds its consensus sequence, where it cleaves and resolves the cruciform DNA. The protein is Holliday junction branch migration complex subunit RuvA of Prochlorococcus marinus subsp. pastoris (strain CCMP1986 / NIES-2087 / MED4).